We begin with the raw amino-acid sequence, 269 residues long: Mitochondrial distribution and morphology protein 12 (269 aa).

The SMP-LTD domain maps to 1–269 (MSLEVNWEQI…WPNWIEFQGV (269 aa)). The tract at residues 72–119 (ERAGTGEGDEDDGRVAPTSTPMKHQTSGSSDQTDASNPISPSTSHDHE) is disordered. The span at 88-114 (PTSTPMKHQTSGSSDQTDASNPISPST) shows a compositional bias: polar residues.

Belongs to the MDM12 family. In terms of assembly, component of the ER-mitochondria encounter structure (ERMES) or MDM complex, composed of MMM1, MDM10, MDM12 and MDM34. An MMM1 homodimer associates with one molecule of MDM12 on each side in a pairwise head-to-tail manner, and the SMP-LTD domains of MMM1 and MDM12 generate a continuous hydrophobic tunnel for phospholipid trafficking.

It is found in the mitochondrion outer membrane. Its subcellular location is the endoplasmic reticulum membrane. In terms of biological role, component of the ERMES/MDM complex, which serves as a molecular tether to connect the endoplasmic reticulum (ER) and mitochondria. Components of this complex are involved in the control of mitochondrial shape and protein biogenesis, and function in nonvesicular lipid trafficking between the ER and mitochondria. MDM12 is required for the interaction of the ER-resident membrane protein MMM1 and the outer mitochondrial membrane-resident beta-barrel protein MDM10. The MDM12-MMM1 subcomplex functions in the major beta-barrel assembly pathway that is responsible for biogenesis of all mitochondrial outer membrane beta-barrel proteins, and acts in a late step after the SAM complex. The MDM10-MDM12-MMM1 subcomplex further acts in the TOM40-specific pathway after the action of the MDM12-MMM1 complex. Essential for establishing and maintaining the structure of mitochondria and maintenance of mtDNA nucleoids. This is Mitochondrial distribution and morphology protein 12 from Komagataella phaffii (strain GS115 / ATCC 20864) (Yeast).